The chain runs to 255 residues: tRNA pseudouridine synthase A (255 aa).

D53 serves as the catalytic Nucleophile. Position 113 (Y113) interacts with substrate.

Belongs to the tRNA pseudouridine synthase TruA family. As to quaternary structure, homodimer.

It carries out the reaction uridine(38/39/40) in tRNA = pseudouridine(38/39/40) in tRNA. Its function is as follows. Formation of pseudouridine at positions 38, 39 and 40 in the anticodon stem and loop of transfer RNAs. This chain is tRNA pseudouridine synthase A, found in Acidiphilium cryptum (strain JF-5).